We begin with the raw amino-acid sequence, 114 residues long: Evasin-1 (114 aa).

The signal sequence occupies residues 1-20 (MTFKACIAIITALCAMQVIC). 4 cysteine pairs are disulfide-bonded: Cys-32-Cys-53, Cys-49-Cys-90, Cys-66-Cys-95, and Cys-85-Cys-104. Residues Asn-39, Asn-54, and Asn-62 are each glycosylated (N-linked (GlcNAc...) asparagine).

This sequence belongs to the evasin C8 family. As to quaternary structure, monomer.

It is found in the secreted. Salivary chemokine-binding protein which shows chemokine neutralizing activity and binds to host chemokines CCL3, CCL4 and CCL18. Binds to CCL3 with 1:1 stoichiometry. The chain is Evasin-1 from Rhipicephalus sanguineus (Brown dog tick).